Here is a 513-residue protein sequence, read N- to C-terminus: MQLNSTEIAELIKQRIEQFEVVSEARNEGTIVGVTDGIIRIHGLADVMQGEMIELPGNRYAIALNLERDSVGAVVMGPYADLQEGAKVTSSGRILEVPVGRGLLGRVVNTLGAPIDGKGAIEADGFEPVEKIAPGVIERQSVDQPIQTGYKSVDAMIPVGRGQRELVIGDRQTGKTALAIDAIINQKDSGVKCVYVAVGQKASTIANVVRKLEEHGAMAHTIVVAASASESAALQYLAPYSGCTMGEYFRDRGEDALIVYDDLSKQAVAYRQISLLLRRPPGREAYPGDVFYLHSRLLERAARVNENYVENFTKGEVKGKTGSLTALPIIETQAGDVSAFVPTNVISITDGQIFLETDLFNSGIRPAVNAGISVSRVGGAAQTKIVKKLGGGIRLALAQYRELAAFSQFASDLDEATRAQLEHGERVMELMKQNQYAPLSVADMSVSLFAVEKGYLKDVELDKILDFEAALHSYMNSEYAELIKTINDTGNFNGEIEATLAEALEKFKATQTW.

169-176 is a binding site for ATP; sequence GDRQTGKT.

This sequence belongs to the ATPase alpha/beta chains family. In terms of assembly, F-type ATPases have 2 components, CF(1) - the catalytic core - and CF(0) - the membrane proton channel. CF(1) has five subunits: alpha(3), beta(3), gamma(1), delta(1), epsilon(1). CF(0) has three main subunits: a(1), b(2) and c(9-12). The alpha and beta chains form an alternating ring which encloses part of the gamma chain. CF(1) is attached to CF(0) by a central stalk formed by the gamma and epsilon chains, while a peripheral stalk is formed by the delta and b chains.

Its subcellular location is the cell inner membrane. The enzyme catalyses ATP + H2O + 4 H(+)(in) = ADP + phosphate + 5 H(+)(out). Its function is as follows. Produces ATP from ADP in the presence of a proton gradient across the membrane. The alpha chain is a regulatory subunit. The sequence is that of ATP synthase subunit alpha 2 from Pseudoalteromonas atlantica (strain T6c / ATCC BAA-1087).